The following is a 100-amino-acid chain: Large ribosomal subunit protein bL21 (100 aa).

This sequence belongs to the bacterial ribosomal protein bL21 family. Part of the 50S ribosomal subunit. Contacts protein L20.

This protein binds to 23S rRNA in the presence of protein L20. The chain is Large ribosomal subunit protein bL21 from Ureaplasma parvum serovar 3 (strain ATCC 27815 / 27 / NCTC 11736).